The chain runs to 580 residues: Arrestin domain-containing protein A (580 aa).

N-linked (GlcNAc...) asparagine glycans are attached at residues asparagine 27, asparagine 33, and asparagine 60. The tract at residues 31 to 54 is disordered; that stretch reads NVNTTSSHHHHHSNSGNAEVSFNG. Disordered regions lie at residues 67–86 and 95–114; these read ETHSGHHHHHSNGGNAEISI and MTMSVTDSNSGHHHHHHKES. A helical membrane pass occupies residues 118–138; the sequence is NLSLGGIVGAVVGAVTGGVMI. 3 N-linked (GlcNAc...) asparagine glycosylation sites follow: asparagine 149, asparagine 341, and asparagine 342. The segment at 468–528 adopts an FYVE-type zinc-finger fold; it reads DEHATACRKC…VCEECYPIAT (61 aa). Cysteine 474, cysteine 477, cysteine 490, cysteine 493, cysteine 498, cysteine 501, cysteine 520, and cysteine 523 together coordinate Zn(2+).

Belongs to the arrestin family.

The protein localises to the membrane. The sequence is that of Arrestin domain-containing protein A (adcA) from Dictyostelium discoideum (Social amoeba).